A 233-amino-acid chain; its full sequence is DNA repair protein RecO (233 aa).

This sequence belongs to the RecO family.

Its function is as follows. Involved in DNA repair and RecF pathway recombination. This is DNA repair protein RecO from Psychromonas ingrahamii (strain DSM 17664 / CCUG 51855 / 37).